A 506-amino-acid chain; its full sequence is ATP synthase subunit alpha (506 aa).

171 to 178 provides a ligand contact to ATP; it reads GDRQTGKT.

It belongs to the ATPase alpha/beta chains family. In terms of assembly, F-type ATPases have 2 components, CF(1) - the catalytic core - and CF(0) - the membrane proton channel. CF(1) has five subunits: alpha(3), beta(3), gamma(1), delta(1), epsilon(1). CF(0) has four main subunits: a(1), b(1), b'(1) and c(9-12).

The protein localises to the cellular thylakoid membrane. It carries out the reaction ATP + H2O + 4 H(+)(in) = ADP + phosphate + 5 H(+)(out). In terms of biological role, produces ATP from ADP in the presence of a proton gradient across the membrane. The alpha chain is a regulatory subunit. The chain is ATP synthase subunit alpha from Nostoc sp. (strain PCC 7120 / SAG 25.82 / UTEX 2576).